The following is a 1167-amino-acid chain: ATP-dependent helicase/deoxyribonuclease subunit B (1167 aa).

A UvrD-like helicase ATP-binding domain is found at 1 to 359; sequence MSLRFLLGRS…IRQTEAYRDL (359 aa). 8–15 is a binding site for ATP; sequence GRSGSGKT. In terms of domain architecture, UvrD-like helicase C-terminal spans 282–588; that stretch reads ANRRHEDRAL…EFSLVPPAMD (307 aa). C804, C1126, C1129, and C1135 together coordinate [4Fe-4S] cluster.

It belongs to the helicase family. AddB/RexB type 1 subfamily. Heterodimer of AddA and AddB. Requires Mg(2+) as cofactor. [4Fe-4S] cluster is required as a cofactor.

In terms of biological role, the heterodimer acts as both an ATP-dependent DNA helicase and an ATP-dependent, dual-direction single-stranded exonuclease. Recognizes the chi site generating a DNA molecule suitable for the initiation of homologous recombination. The AddB subunit has 5' -&gt; 3' nuclease activity but not helicase activity. In Geobacillus kaustophilus (strain HTA426), this protein is ATP-dependent helicase/deoxyribonuclease subunit B.